The following is a 315-amino-acid chain: Methionyl-tRNA formyltransferase (315 aa).

113-116 is a binding site for (6S)-5,6,7,8-tetrahydrofolate; that stretch reads SLLP.

Belongs to the Fmt family.

It carries out the reaction L-methionyl-tRNA(fMet) + (6R)-10-formyltetrahydrofolate = N-formyl-L-methionyl-tRNA(fMet) + (6S)-5,6,7,8-tetrahydrofolate + H(+). Functionally, attaches a formyl group to the free amino group of methionyl-tRNA(fMet). The formyl group appears to play a dual role in the initiator identity of N-formylmethionyl-tRNA by promoting its recognition by IF2 and preventing the misappropriation of this tRNA by the elongation apparatus. The chain is Methionyl-tRNA formyltransferase from Escherichia coli O17:K52:H18 (strain UMN026 / ExPEC).